The sequence spans 532 residues: Di/tripeptide-binding protein 2 (532 aa).

Residues 1–24 (MRPRSALRYSLLLLAFAASAAIQA) form the signal peptide.

The protein belongs to the bacterial solute-binding protein 5 family. The complex is composed of two ATP-binding proteins (DppD and DppF), two transmembrane proteins (DppB and DppC) and a solute-binding protein (DppA2). Five orthologous SBPs (DppA1-A5) are present in P.aeruginosa, which increases the substrate specificity of the DppBCDF transporter.

Functionally, part of the ABC transporter DppABCDF involved in the uptake of various di/tripeptides. Shows high flexibility on substrate recognition. Efficiently uses tripeptides. This is Di/tripeptide-binding protein 2 from Pseudomonas aeruginosa (strain UCBPP-PA14).